We begin with the raw amino-acid sequence, 257 residues long: Hydroxyacylglutathione hydrolase (257 aa).

Zn(2+) contacts are provided by H58, H60, D62, H63, H116, D135, and H173.

This sequence belongs to the metallo-beta-lactamase superfamily. Glyoxalase II family. Monomer. The cofactor is Zn(2+).

The enzyme catalyses an S-(2-hydroxyacyl)glutathione + H2O = a 2-hydroxy carboxylate + glutathione + H(+). Its pathway is secondary metabolite metabolism; methylglyoxal degradation; (R)-lactate from methylglyoxal: step 2/2. Functionally, thiolesterase that catalyzes the hydrolysis of S-D-lactoyl-glutathione to form glutathione and D-lactic acid. The chain is Hydroxyacylglutathione hydrolase from Brucella melitensis biotype 1 (strain ATCC 23456 / CCUG 17765 / NCTC 10094 / 16M).